The primary structure comprises 459 residues: UDP-N-acetylglucosamine 1-carboxyvinyltransferase (459 aa).

40–41 is a phosphoenolpyruvate binding site; sequence KN. R111 is a UDP-N-acetyl-alpha-D-glucosamine binding site. Catalysis depends on C135, which acts as the Proton donor. C135 bears the 2-(S-cysteinyl)pyruvic acid O-phosphothioketal mark. UDP-N-acetyl-alpha-D-glucosamine-binding positions include 140–144, D324, and V346; that span reads RPVDL. The interval 437 to 459 is disordered; the sequence is PSAPPSEVSSAVAAGPDAAAAPV. Residues 441–459 show a composition bias toward low complexity; it reads PSEVSSAVAAGPDAAAAPV.

This sequence belongs to the EPSP synthase family. MurA subfamily.

It localises to the cytoplasm. It carries out the reaction phosphoenolpyruvate + UDP-N-acetyl-alpha-D-glucosamine = UDP-N-acetyl-3-O-(1-carboxyvinyl)-alpha-D-glucosamine + phosphate. The protein operates within cell wall biogenesis; peptidoglycan biosynthesis. Functionally, cell wall formation. Adds enolpyruvyl to UDP-N-acetylglucosamine. This Gloeobacter violaceus (strain ATCC 29082 / PCC 7421) protein is UDP-N-acetylglucosamine 1-carboxyvinyltransferase.